The chain runs to 466 residues: Cysteine--tRNA ligase (466 aa).

Zn(2+) is bound at residue C27. The 'HIGH' region signature appears at 29-39; it reads PTVYNYFHIGN. The Zn(2+) site is built by C207, H232, and E236. Positions 264–268 match the 'KMSKS' region motif; the sequence is KMSKS. Position 267 (K267) interacts with ATP.

Belongs to the class-I aminoacyl-tRNA synthetase family. As to quaternary structure, monomer. Zn(2+) is required as a cofactor.

It localises to the cytoplasm. It carries out the reaction tRNA(Cys) + L-cysteine + ATP = L-cysteinyl-tRNA(Cys) + AMP + diphosphate. The sequence is that of Cysteine--tRNA ligase from Clostridium novyi (strain NT).